The following is a 278-amino-acid chain: Large ribosomal subunit protein uL2 (278 aa).

Positions 214–278 (WLGKRPHNRG…IMRSRHQRKS (65 aa)) are disordered.

Belongs to the universal ribosomal protein uL2 family. As to quaternary structure, part of the 50S ribosomal subunit. Forms a bridge to the 30S subunit in the 70S ribosome.

One of the primary rRNA binding proteins. Required for association of the 30S and 50S subunits to form the 70S ribosome, for tRNA binding and peptide bond formation. It has been suggested to have peptidyltransferase activity; this is somewhat controversial. Makes several contacts with the 16S rRNA in the 70S ribosome. This is Large ribosomal subunit protein uL2 from Chelativorans sp. (strain BNC1).